The following is a 136-amino-acid chain: Histone H3.3 (136 aa).

A disordered region spans residues 1-45; that stretch reads MARTKQTARKSTGGKAPRKQLASKAARKAAPATGGVKKPHRYRPP. Lys-5 carries the post-translational modification N6,N6,N6-trimethyllysine; alternate. Lys-5 is modified (N6,N6-dimethyllysine; alternate). Lys-5 and Lys-10 each carry N6-methyllysine; alternate. Lys-10 carries the post-translational modification N6-acetyllysine; alternate. Ser-11 bears the Phosphoserine mark. Lys-15 is subject to N6,N6-dimethyllysine; alternate. N6-acetyllysine; alternate occurs at positions 15, 19, 24, 28, and 37. An N6-methyllysine; alternate mark is found at Lys-19, Lys-24, Lys-28, and Lys-37. The span at 19-32 shows a compositional bias: low complexity; sequence KQLASKAARKAAPA. An N6,N6,N6-trimethyllysine; alternate mark is found at Lys-28 and Lys-37. N6,N6-dimethyllysine; alternate occurs at positions 28 and 37. 2 positions are modified to N6-acetyllysine: Lys-57 and Lys-65. The residue at position 80 (Lys-80) is an N6,N6,N6-trimethyllysine; alternate. At Lys-80 the chain carries N6,N6-dimethyllysine; alternate. The residue at position 80 (Lys-80) is an N6-methyllysine; alternate. Lys-123 carries the N6-acetyllysine modification.

It belongs to the histone H3 family. The nucleosome is a histone octamer containing two molecules each of H2A, H2B, H3 and H4 assembled in one H3-H4 heterotetramer and two H2A-H2B heterodimers. The octamer wraps approximately 147 bp of DNA. In terms of processing, phosphorylated by ark1 to form H3S10ph in a cell cycle-dependent manner during mitosis and meiosis. H3S10ph is also formed by ssp2, promotes subsequent H3K14ac formation by gcn5, and is required for transcriptional activation through TBP recruitment to the promoters. Dephosphorylation is performed by sds21. Mono-, di- and trimethylated by the COMPASS complex to form H3K4me1/2/3. H3K4me activates gene expression by regulating transcription elongation and plays a role in telomere length maintenance. H3K4me enrichment correlates with transcription levels, and occurs in a 5' to 3' gradient with H3K4me3 enrichment at the 5'-end of genes, shifting to H3K4me2 and then H3K4me1. Methylated by clr4 to form H3K9me1. H3K9me1 represents a specific tag for epigenetic transcriptional repression by recruiting swi6/HP1 to methylated histones. Targeting to histone probably involves clr3 and rik1. Essential for silencing of centromeres and directional switching of the mating type. Methylated by set2 to form H3K36me. H3K36me represses gene expression. Methylated by dot1 to form H3K79me. H3K79me is required for association of SIR proteins with telomeric regions and for telomeric silencing. The COMPASS-mediated formation of H3K4me2/3 and the dot1-mediated formation of H3K79me require H2BK123ub1. Post-translationally, acetylation of histone H3 leads to transcriptional activation. H3K14ac formation by gcn5 is promoted by H3S10ph. H3K14ac can also be formed by esa1. H3K56ac formation occurs predominantly in newly synthesized H3 molecules during G1, S and G2/M of the cell cycle and may be involved in DNA repair. Acetylation at Lys-123 (H3K122ac) plays a central role in chromatin structure: localizes at the surface of the histone octamer and stimulates transcription, possibly by promoting nucleosome instability.

The protein localises to the nucleus. The protein resides in the chromosome. Functionally, core component of nucleosome. Nucleosomes wrap and compact DNA into chromatin, limiting DNA accessibility to the cellular machineries which require DNA as a template. Histones thereby play a central role in transcription regulation, DNA repair, DNA replication and chromosomal stability. DNA accessibility is regulated via a complex set of post-translational modifications of histones, also called histone code, and nucleosome remodeling. The chain is Histone H3.3 (hht3) from Schizosaccharomyces pombe (strain 972 / ATCC 24843) (Fission yeast).